We begin with the raw amino-acid sequence, 351 residues long: Anthranilate phosphoribosyltransferase (351 aa).

5-phospho-alpha-D-ribose 1-diphosphate contacts are provided by residues glycine 80, 83 to 84 (GD), threonine 88, 90 to 93 (NIST), 108 to 116 (KHGNRSVTS), and serine 120. Glycine 80 provides a ligand contact to anthranilate. Residue serine 92 coordinates Mg(2+). Residue asparagine 111 coordinates anthranilate. Residue arginine 166 participates in anthranilate binding. Mg(2+)-binding residues include aspartate 229 and glutamate 230.

It belongs to the anthranilate phosphoribosyltransferase family. In terms of assembly, homodimer. Requires Mg(2+) as cofactor.

It carries out the reaction N-(5-phospho-beta-D-ribosyl)anthranilate + diphosphate = 5-phospho-alpha-D-ribose 1-diphosphate + anthranilate. It functions in the pathway amino-acid biosynthesis; L-tryptophan biosynthesis; L-tryptophan from chorismate: step 2/5. Catalyzes the transfer of the phosphoribosyl group of 5-phosphorylribose-1-pyrophosphate (PRPP) to anthranilate to yield N-(5'-phosphoribosyl)-anthranilate (PRA). This chain is Anthranilate phosphoribosyltransferase, found in Chlorobium phaeovibrioides (strain DSM 265 / 1930) (Prosthecochloris vibrioformis (strain DSM 265)).